The chain runs to 382 residues: Galactokinase (382 aa).

Residue 34–37 participates in substrate binding; the sequence is EHTD. Residue 124 to 130 participates in ATP binding; it reads GAGLSSS. Mg(2+)-binding residues include S130 and E162. The active-site Proton acceptor is the D174. A substrate-binding site is contributed by Y223.

Belongs to the GHMP kinase family. GalK subfamily.

Its subcellular location is the cytoplasm. The catalysed reaction is alpha-D-galactose + ATP = alpha-D-galactose 1-phosphate + ADP + H(+). Its pathway is carbohydrate metabolism; galactose metabolism. Functionally, catalyzes the transfer of the gamma-phosphate of ATP to D-galactose to form alpha-D-galactose-1-phosphate (Gal-1-P). The chain is Galactokinase from Shigella boydii serotype 4 (strain Sb227).